Consider the following 103-residue polypeptide: Large ribosomal subunit protein bL21 (103 aa).

Belongs to the bacterial ribosomal protein bL21 family. As to quaternary structure, part of the 50S ribosomal subunit. Contacts protein L20.

Its function is as follows. This protein binds to 23S rRNA in the presence of protein L20. The protein is Large ribosomal subunit protein bL21 of Pasteurella multocida (strain Pm70).